The chain runs to 280 residues: Energy-coupling factor transporter ATP-binding protein EcfA1 (280 aa).

The region spanning 6 to 244 (IECKNVVYKY…VPLMKNIGLD (239 aa)) is the ABC transporter domain. 43–50 (GHNGSGKS) contacts ATP.

The protein belongs to the ABC transporter superfamily. Energy-coupling factor EcfA family. Forms a stable energy-coupling factor (ECF) transporter complex composed of 2 membrane-embedded substrate-binding proteins (S component), 2 ATP-binding proteins (A component) and 2 transmembrane proteins (T component).

Its subcellular location is the cell membrane. Functionally, ATP-binding (A) component of a common energy-coupling factor (ECF) ABC-transporter complex. Unlike classic ABC transporters this ECF transporter provides the energy necessary to transport a number of different substrates. This Clostridium novyi (strain NT) protein is Energy-coupling factor transporter ATP-binding protein EcfA1.